The primary structure comprises 703 residues: Polyribonucleotide nucleotidyltransferase (703 aa).

Residues Asp-482 and Asp-488 each coordinate Mg(2+). In terms of domain architecture, KH spans 549-607 (PKAQVMKIPEDKVGLVIGPAGKNIKYIKEQFGASVWIDGANAYINAPTIEAVNKAADFI). In terms of domain architecture, S1 motif spans 617–679 (GGVYEGKVIR…EQNRLNLCSP (63 aa)). The segment at 677-703 (CSPDYQKPENQERPRKEQLNRKPHHRK) is disordered. Residues 682 to 696 (QKPENQERPRKEQLN) are compositionally biased toward basic and acidic residues.

This sequence belongs to the polyribonucleotide nucleotidyltransferase family. The cofactor is Mg(2+).

The protein resides in the cytoplasm. It catalyses the reaction RNA(n+1) + phosphate = RNA(n) + a ribonucleoside 5'-diphosphate. Its function is as follows. Involved in mRNA degradation. Catalyzes the phosphorolysis of single-stranded polyribonucleotides processively in the 3'- to 5'-direction. This is Polyribonucleotide nucleotidyltransferase from Hydrogenobaculum sp. (strain Y04AAS1).